Consider the following 465-residue polypeptide: Probable zinc metalloprotease PTT_17836 (465 aa).

An N-terminal signal peptide occupies residues 1 to 20 (MRSASTLAVCAATLLQIACS). N-linked (GlcNAc...) asparagine glycosylation is present at N140. H163, D183, and E216 together coordinate Zn(2+). An N-linked (GlcNAc...) asparagine glycan is attached at N231. Position 243 (D243) interacts with Zn(2+). 6 N-linked (GlcNAc...) asparagine glycosylation sites follow: N272, N330, N378, N384, N421, and N426. The region spanning 371–464 (APTNVGVNTT…LPFPFGCARN (94 aa)) is the Fibronectin type-III domain.

This sequence belongs to the peptidase M28 family. M28B subfamily. Requires Zn(2+) as cofactor.

The protein localises to the secreted. This chain is Probable zinc metalloprotease PTT_17836, found in Pyrenophora teres f. teres (strain 0-1) (Barley net blotch fungus).